The primary structure comprises 340 residues: NAC domain-containing protein 89 (340 aa).

The NAC domain maps to 21–164 (VFPGFKFSPT…AMVVCRVRRN (144 aa)). A DNA-binding region spans residues 119–170 (IGTKRTLVFHIGRAPKGERTDWIMHEYCVKGVSLDDAMVVCRVRRNKEYNSG). Over residues 167–181 (YNSGTSQKAPKPNSS) the composition is skewed to polar residues. Residues 167-198 (YNSGTSQKAPKPNSSAEKHAKVQNGATSSGSP) are disordered.

As to quaternary structure, interacts with PAS1.

It localises to the cytoplasm. It is found in the nucleus. In terms of biological role, transcription factor involved in plant cell division. The sequence is that of NAC domain-containing protein 89 (NAC089) from Arabidopsis thaliana (Mouse-ear cress).